The chain runs to 300 residues: Serine/arginine-rich splicing factor SR34A (300 aa).

The RRM 1 domain occupies Arg-7 to Gly-82. Disordered stretches follow at residues His-81–Gly-110 and Tyr-198–Val-300. Residues Gly-94–Gly-110 show a composition bias toward gly residues. An RRM 2 domain is found at Phe-122 to Ser-200. The segment covering Ser-203–Ser-239 has biased composition (basic residues). Ser-207, Ser-209, Ser-231, Ser-233, Ser-239, Ser-259, Ser-275, and Ser-285 each carry phosphoserine. Residues Ser-253 to Pro-262 are compositionally biased toward low complexity. Residues Ser-275–Ser-287 are compositionally biased toward basic residues.

This sequence belongs to the splicing factor SR family. SR subfamily. As to quaternary structure, component of the spliceosome.

The protein resides in the nucleus speckle. The protein localises to the nucleus. It is found in the nucleoplasm. Functionally, probably involved in intron recognition and spliceosome assembly. This is Serine/arginine-rich splicing factor SR34A (SR34A) from Arabidopsis thaliana (Mouse-ear cress).